Here is a 786-residue protein sequence, read N- to C-terminus: Sucrose synthase (786 aa).

The tract at residues 259 to 736 (MIFSLVVLSP…ALKRVEERYN (478 aa)) is GT-B glycosyltransferase.

Belongs to the glycosyltransferase 1 family. As to quaternary structure, homotetramer.

The catalysed reaction is an NDP-alpha-D-glucose + D-fructose = a ribonucleoside 5'-diphosphate + sucrose + H(+). Functionally, catalyzes the reversible conversion of sucrose and a nucleotide disphosphate (NDP) into fructose and NDP-glucose; although the reaction is freely reversible in vitro, the physiological reaction seems to be sucrose cleavage. Unlike characterized plant enzymes prefers ADP as a cosubstrate, whereas plants prefer UDP. Its preference for ADP over UDP suggests it may directly link sucrose and glycogen metabolism. In Denitrovibrio acetiphilus (strain DSM 12809 / NBRC 114555 / N2460), this protein is Sucrose synthase.